The primary structure comprises 88 residues: HssA/B-like protein 19 (88 aa).

It belongs to the hssA/B family.

The polypeptide is HssA/B-like protein 19 (hssl19) (Dictyostelium discoideum (Social amoeba)).